The primary structure comprises 121 residues: UPF0295 protein OB0906 (121 aa).

Helical transmembrane passes span 14–34 and 43–63; these read IRTF…GGIL and VIFF…YVWI.

Belongs to the UPF0295 family.

The protein localises to the cell membrane. The polypeptide is UPF0295 protein OB0906 (Oceanobacillus iheyensis (strain DSM 14371 / CIP 107618 / JCM 11309 / KCTC 3954 / HTE831)).